A 167-amino-acid chain; its full sequence is Transmembrane protein 229B (167 aa).

Topologically, residues 1-14 (MASAEPLTALSRWY) are cytoplasmic. The chain crosses the membrane as a helical span at residues 15–35 (LYAIHGYFCEVMFTAAWEFVV). Over 36 to 40 (NFNWK) the chain is Extracellular. Residues 41–61 (FPGVTSVWALFIYGTSILIVE) form a helical membrane-spanning segment. Residues 62–73 (RMYLRLRGRCPL) are Cytoplasmic-facing. Residues 74–94 (LVRCVIYTLWTYLWEFTTGFI) form a helical membrane-spanning segment. Over 95-109 (LRQFNACPWDYSQFD) the chain is Extracellular. The chain crosses the membrane as a helical span at residues 110–130 (FDFMGLITLEYAVPWFCGALI). Over 131–167 (MEQFIIRNTLRLRFDKDAEPGEPASPPALANGHVKTD) the chain is Cytoplasmic. Residues 148–167 (AEPGEPASPPALANGHVKTD) are disordered.

This sequence belongs to the TMEM229 family.

Its subcellular location is the membrane. This Mus musculus (Mouse) protein is Transmembrane protein 229B (TMEM229B).